Reading from the N-terminus, the 430-residue chain is Tol-Pal system protein TolB (430 aa).

The first 21 residues, 1-21 (MKQALRVAFGFLILWASVLHA), serve as a signal peptide directing secretion.

Belongs to the TolB family. In terms of assembly, the Tol-Pal system is composed of five core proteins: the inner membrane proteins TolA, TolQ and TolR, the periplasmic protein TolB and the outer membrane protein Pal. They form a network linking the inner and outer membranes and the peptidoglycan layer.

It localises to the periplasm. Functionally, part of the Tol-Pal system, which plays a role in outer membrane invagination during cell division and is important for maintaining outer membrane integrity. TolB occupies a key intermediary position in the Tol-Pal system because it communicates directly with both membrane-embedded components, Pal in the outer membrane and TolA in the inner membrane. This is Tol-Pal system protein TolB from Escherichia coli O8 (strain IAI1).